Reading from the N-terminus, the 139-residue chain is ATP synthase epsilon chain (139 aa).

It belongs to the ATPase epsilon chain family. F-type ATPases have 2 components, CF(1) - the catalytic core - and CF(0) - the membrane proton channel. CF(1) has five subunits: alpha(3), beta(3), gamma(1), delta(1), epsilon(1). CF(0) has three main subunits: a, b and c.

The protein localises to the cell inner membrane. Produces ATP from ADP in the presence of a proton gradient across the membrane. This is ATP synthase epsilon chain from Alcanivorax borkumensis (strain ATCC 700651 / DSM 11573 / NCIMB 13689 / SK2).